The chain runs to 248 residues: 2,3-bisphosphoglycerate-dependent phosphoglycerate mutase (248 aa).

Substrate-binding positions include Arg-8–Asn-15, Thr-21–Gly-22, Arg-60, Glu-87–Tyr-90, Lys-98, Arg-114–Arg-115, and Gly-183–Asn-184. The active-site Tele-phosphohistidine intermediate is the His-9. Catalysis depends on Glu-87, which acts as the Proton donor/acceptor.

Belongs to the phosphoglycerate mutase family. BPG-dependent PGAM subfamily.

The catalysed reaction is (2R)-2-phosphoglycerate = (2R)-3-phosphoglycerate. The protein operates within carbohydrate degradation; glycolysis; pyruvate from D-glyceraldehyde 3-phosphate: step 3/5. Functionally, catalyzes the interconversion of 2-phosphoglycerate and 3-phosphoglycerate. This chain is 2,3-bisphosphoglycerate-dependent phosphoglycerate mutase, found in Borrelia hermsii (strain HS1 / DAH).